Here is a 198-residue protein sequence, read N- to C-terminus: Holliday junction resolvase RecU (198 aa).

The segment at 1 to 22 (MVNYPHKLSSQKRQTSLSQPKN) is disordered. Residues 11-22 (QKRQTSLSQPKN) show a composition bias toward polar residues. Positions 81, 83, 96, and 115 each coordinate Mg(2+).

This sequence belongs to the RecU family. Mg(2+) serves as cofactor.

The protein resides in the cytoplasm. It carries out the reaction Endonucleolytic cleavage at a junction such as a reciprocal single-stranded crossover between two homologous DNA duplexes (Holliday junction).. Functionally, endonuclease that resolves Holliday junction intermediates in genetic recombination. Cleaves mobile four-strand junctions by introducing symmetrical nicks in paired strands. Promotes annealing of linear ssDNA with homologous dsDNA. Required for DNA repair, homologous recombination and chromosome segregation. This is Holliday junction resolvase RecU from Streptococcus pneumoniae (strain Hungary19A-6).